The following is a 147-amino-acid chain: Probable disulfide formation protein (147 aa).

The helical transmembrane segment at 9–28 threads the bilayer; that stretch reads NYSLYFAWLTALIATLGSLY. The cysteines at positions 38 and 41 are disulfide-linked. Helical transmembrane passes span 43–62 and 69–86; these read YQRV…AYRT and YALP…YQYL. Cys-99 and Cys-106 form a disulfide bridge. A helical transmembrane segment spans residues 115 to 138; sequence GFITLPFLGMLATLIMSFFLIMAF.

The protein belongs to the DsbB family. BdbC subfamily.

It is found in the cell inner membrane. Functionally, required for disulfide bond formation in some proteins. The polypeptide is Probable disulfide formation protein (Coxiella burnetii (strain CbuK_Q154) (Coxiella burnetii (strain Q154))).